Consider the following 103-residue polypeptide: Small ribosomal subunit protein uS10 (103 aa).

This sequence belongs to the universal ribosomal protein uS10 family. In terms of assembly, part of the 30S ribosomal subunit.

Its function is as follows. Involved in the binding of tRNA to the ribosomes. The protein is Small ribosomal subunit protein uS10 of Campylobacter lari (strain RM2100 / D67 / ATCC BAA-1060).